A 382-amino-acid chain; its full sequence is Regulatory protein RapC (382 aa).

TPR repeat units lie at residues 102–138 (YYVNFFRGMYEFDKREFISAITYYKQAEKKLSFVADH), 149–182 (AEAYYYMKQTYFSLINIKNAYEIYVEQETYNVRI), 183–216 (IQCHFVFGVNLMDERNFEQAARHFKLALNMAQAE), 223–256 (GRAYYNLGLCYYNQDLLDPAIDYFEKAVSTFESS), and 263–296 (PQAYFLITLIYYKQGKHDKASEYHKRGYEYAKET).

This sequence belongs to the Rap family. Homodimer. Interacts specifically with the C-terminal DNA-binding domain of ComA. Interacts with CSF.

The protein localises to the cytoplasm. Inhibited by the competence and sporulation stimulating factor (CSF), encoded by phrC, which prevents RapC-ComA interaction. Its function is as follows. Involved in the regulation of genetic competence development. Inhibits the activity of ComA, a transcriptional factor that regulates the development of genetic competence. Acts by binding to ComA, independently of its phosphorylation state, leading to the inhibition of ComA DNA-binding activity. Does not dephosphorylate phospho-ComA and does not affect the phosphorylation level of the ComP-ComA system. This Bacillus subtilis (strain 168) protein is Regulatory protein RapC (rapC).